The chain runs to 629 residues: Transmembrane 9 superfamily protein C1105.08 (629 aa).

A signal peptide spans 1 to 26; sequence MLLPSIPSCSFSFVVFVSVLLQTCFS. The Lumenal segment spans residues 27-266; the sequence is FQLTPLSPKN…MHIESRQIRW (240 aa). Asparagine 157 carries an N-linked (GlcNAc...) asparagine glycan. The chain crosses the membrane as a helical span at residues 267 to 287; sequence IFIIHSAIIDTFLIFVVSIIL. Residues 288–337 lie on the Cytoplasmic side of the membrane; sequence YRTLNRDINKYNSAFVDQEDVQEDFGWKLVHGDVFRPPRRPMLFSILLGT. Residues 338 to 358 traverse the membrane as a helical segment; that stretch reads GAQLLFMSSGIVLFAIFGIVA. The Lumenal segment spans residues 359–364; the sequence is PSRRGS. Residues 365–385 traverse the membrane as a helical segment; it reads LATATVALFIISGFVSGYVSA. The Cytoplasmic portion of the chain corresponds to 386-401; it reads LSYKLMQGMLRKRNLL. A helical membrane pass occupies residues 402–422; that stretch reads LTPFVVPGFMLAAALFFNMVF. Over 423-436 the chain is Lumenal; sequence WSKSSSSTVPFSSW. A helical transmembrane segment spans residues 437 to 457; the sequence is LLLIFLYLLFTVPLSFVGSLI. Topologically, residues 458 to 488 are cytoplasmic; it reads GFRSREFVPPVRTNQIPRQIPSHSIWLSSFP. Residues 489-509 form a helical membrane-spanning segment; the sequence is SAIIGGSIPFLVILIELFSIL. Residues 510–519 lie on the Lumenal side of the membrane; the sequence is DSLWFHPLYF. Residues 520–544 form a helical membrane-spanning segment; the sequence is MFGFSFFCFGILVTTCIMVSIITVY. The Cytoplasmic portion of the chain corresponds to 545-558; sequence FQLCSENYNWWWRS. The chain crosses the membrane as a helical span at residues 559–579; that stretch reads FITPGFCGIYVFIFSVFYWFF. The Lumenal segment spans residues 580 to 598; it reads KISSSSLATAVLYFGYSLL. A helical transmembrane segment spans residues 599 to 619; that stretch reads ISVLVFFLCGSVGFFGAFLFV. Residues 620–629 are Cytoplasmic-facing; it reads NKIYASIKID.

It belongs to the nonaspanin (TM9SF) (TC 9.A.2) family.

The protein localises to the golgi apparatus membrane. The protein resides in the vacuole membrane. This Schizosaccharomyces pombe (strain 972 / ATCC 24843) (Fission yeast) protein is Transmembrane 9 superfamily protein C1105.08.